A 134-amino-acid polypeptide reads, in one-letter code: Retinoid-binding protein 7 (134 aa).

Belongs to the calycin superfamily. Fatty-acid binding protein (FABP) family. Highly expressed in white adipose tissue and mammary gland.

The protein resides in the cytoplasm. In terms of biological role, intracellular transport of retinol. In Mus musculus (Mouse), this protein is Retinoid-binding protein 7 (Rbp7).